The primary structure comprises 167 residues: Ribosome maturation factor RimM (167 aa).

The region spanning 92–166 is the PRC barrel domain; sequence DDEFYHTDLI…RIVADPPEGL (75 aa).

It belongs to the RimM family. As to quaternary structure, binds ribosomal protein uS19.

Its subcellular location is the cytoplasm. An accessory protein needed during the final step in the assembly of 30S ribosomal subunit, possibly for assembly of the head region. Essential for efficient processing of 16S rRNA. May be needed both before and after RbfA during the maturation of 16S rRNA. It has affinity for free ribosomal 30S subunits but not for 70S ribosomes. The protein is Ribosome maturation factor RimM of Ruegeria pomeroyi (strain ATCC 700808 / DSM 15171 / DSS-3) (Silicibacter pomeroyi).